A 236-amino-acid chain; its full sequence is NEP1-interacting protein 1 (236 aa).

Residues 1 to 44 (MASSRFQSGFCPISSCPSLENFIERIKDACRFTLSAVLGTILSA) are Lumenal, thylakoid-facing. A helical membrane pass occupies residues 45-65 (VLTFFFALVGTLLGALTGALI). At 66–78 (GQETESGFIRGAA) the chain is on the stromal side. The chain crosses the membrane as a helical span at residues 79 to 99 (VGAISGAVFSIEVFESSLVLW). The Lumenal, thylakoid segment spans residues 100–104 (KSNES). Residues 105–125 (RFGCLLYLIDVIVSLISGRLV) form a helical membrane-spanning segment. Residues 126-236 (RERIGPAMLS…GSCPMCRRDL (111 aa)) are Stromal-facing. The segment at 191-233 (CSVCLQDFQLGETVRSLPHCHHMFHLPCIDNWLFRHGSCPMCR) adopts an RING-type; atypical zinc-finger fold.

This sequence belongs to the RING-type zinc finger family. NIP subfamily. As to quaternary structure, interacts with RPOT2.

It is found in the plastid. Its subcellular location is the chloroplast thylakoid membrane. Intrinsic thylakoid membrane protein that fixes RPOT2 on the stromal side of the thylakoid membrane. In Arabidopsis thaliana (Mouse-ear cress), this protein is NEP1-interacting protein 1 (NIP1).